A 785-amino-acid chain; its full sequence is Mitochondrial intermediate peptidase (785 aa).

The transit peptide at 1-26 (MLKVTTSRPWVCSRCVRRQVQSRRRL) directs the protein to the mitochondrion. Positions 26 to 51 (LATASTQYRESRPVPVDNSAPGAKRD) are disordered. Position 566 (histidine 566) interacts with Zn(2+). Residue glutamate 567 is part of the active site. Zn(2+) contacts are provided by histidine 570 and histidine 573.

Belongs to the peptidase M3 family. Requires Zn(2+) as cofactor.

It localises to the mitochondrion matrix. The enzyme catalyses Release of an N-terminal octapeptide as second stage of processing of some proteins imported into the mitochondrion.. Its function is as follows. Cleaves proteins, imported into the mitochondrion, to their mature size. While most mitochondrial precursor proteins are processed to the mature form in one step by mitochondrial processing peptidase (MPP), the sequential cleavage by MIP of an octapeptide after initial processing by MPP is a required step for a subgroup of nuclear-encoded precursor proteins destined for the matrix or the inner membrane. The chain is Mitochondrial intermediate peptidase (oct1) from Botryotinia fuckeliana (strain B05.10) (Noble rot fungus).